We begin with the raw amino-acid sequence, 246 residues long: UDP-2,3-diacylglucosamine hydrolase (246 aa).

Positions 8, 10, 41, 79, and 114 each coordinate Mn(2+). 79-80 (NR) is a binding site for substrate. Substrate contacts are provided by Asp-122, Ser-160, Lys-164, Lys-167, and His-195. Mn(2+) contacts are provided by His-195 and His-197.

This sequence belongs to the LpxH family. Mn(2+) serves as cofactor.

It localises to the cell inner membrane. It carries out the reaction UDP-2-N,3-O-bis[(3R)-3-hydroxytetradecanoyl]-alpha-D-glucosamine + H2O = 2-N,3-O-bis[(3R)-3-hydroxytetradecanoyl]-alpha-D-glucosaminyl 1-phosphate + UMP + 2 H(+). It participates in glycolipid biosynthesis; lipid IV(A) biosynthesis; lipid IV(A) from (3R)-3-hydroxytetradecanoyl-[acyl-carrier-protein] and UDP-N-acetyl-alpha-D-glucosamine: step 4/6. In terms of biological role, hydrolyzes the pyrophosphate bond of UDP-2,3-diacylglucosamine to yield 2,3-diacylglucosamine 1-phosphate (lipid X) and UMP by catalyzing the attack of water at the alpha-P atom. Involved in the biosynthesis of lipid A, a phosphorylated glycolipid that anchors the lipopolysaccharide to the outer membrane of the cell. This is UDP-2,3-diacylglucosamine hydrolase from Tolumonas auensis (strain DSM 9187 / NBRC 110442 / TA 4).